The following is a 77-amino-acid chain: Putative defensin-like protein 129 (77 aa).

Residues 1-25 form the signal peptide; the sequence is MTKNTALTIFMVVLVIEMVMEETQG. 4 cysteine pairs are disulfide-bonded: cysteine 28-cysteine 77, cysteine 37-cysteine 59, cysteine 42-cysteine 71, and cysteine 46-cysteine 73.

Belongs to the DEFL family.

Its subcellular location is the secreted. The chain is Putative defensin-like protein 129 (LCR13) from Arabidopsis thaliana (Mouse-ear cress).